We begin with the raw amino-acid sequence, 206 residues long: ATP-dependent dethiobiotin synthetase BioD (206 aa).

Glycine 12–isoleucine 17 serves as a coordination point for ATP. Threonine 16 is a binding site for Mg(2+). Lysine 32 is an active-site residue. Mg(2+)-binding residues include histidine 46 and glutamate 98. ATP is bound at residue glutamate 98–glycine 101.

It belongs to the dethiobiotin synthetase family. As to quaternary structure, homodimer. Mg(2+) serves as cofactor.

It is found in the cytoplasm. The enzyme catalyses (7R,8S)-7,8-diammoniononanoate + CO2 + ATP = (4R,5S)-dethiobiotin + ADP + phosphate + 3 H(+). It participates in cofactor biosynthesis; biotin biosynthesis; biotin from 7,8-diaminononanoate: step 1/2. In terms of biological role, catalyzes a mechanistically unusual reaction, the ATP-dependent insertion of CO2 between the N7 and N8 nitrogen atoms of 7,8-diaminopelargonic acid (DAPA, also called 7,8-diammoniononanoate) to form a ureido ring. The polypeptide is ATP-dependent dethiobiotin synthetase BioD (Novosphingobium aromaticivorans (strain ATCC 700278 / DSM 12444 / CCUG 56034 / CIP 105152 / NBRC 16084 / F199)).